The sequence spans 644 residues: Threonine--tRNA ligase (644 aa).

A TGS domain is found at methionine 1 to threonine 62. The tract at residues aspartate 240–proline 538 is catalytic. Zn(2+) is bound by residues cysteine 334, histidine 385, and histidine 515.

The protein belongs to the class-II aminoacyl-tRNA synthetase family. As to quaternary structure, homodimer. The cofactor is Zn(2+).

The protein localises to the cytoplasm. The catalysed reaction is tRNA(Thr) + L-threonine + ATP = L-threonyl-tRNA(Thr) + AMP + diphosphate + H(+). Catalyzes the attachment of threonine to tRNA(Thr) in a two-step reaction: L-threonine is first activated by ATP to form Thr-AMP and then transferred to the acceptor end of tRNA(Thr). Also edits incorrectly charged L-seryl-tRNA(Thr). The polypeptide is Threonine--tRNA ligase (Lactobacillus acidophilus (strain ATCC 700396 / NCK56 / N2 / NCFM)).